The chain runs to 661 residues: Fusaric acid cluster transcription factor FUB12 (661 aa).

The zn(2)-C6 fungal-type DNA-binding region spans 17–48 (CVPCRTRKIKCNAAVVGLPCGSCVSRECPDEC). Disordered regions lie at residues 57-131 (TVKG…RPPG) and 151-185 (SAAQ…QLDD). Over residues 73-98 (PDTNGSILSPRQQQLPTNVSRQTTDS) the composition is skewed to polar residues. Residues 99–109 (SHSDPVEESIH) show a composition bias toward basic and acidic residues. Residues 110 to 119 (ASHTGSSLRN) are compositionally biased toward polar residues. The segment covering 120 to 129 (DTPHSRDRRP) has biased composition (basic and acidic residues).

It localises to the nucleus. Transcription factor that is involved in the formation of the two Fusaric acid derivatives, dehydrofusaric acid and fusarinolic acid, serving as a detoxification mechanism. The sequence is that of Fusaric acid cluster transcription factor FUB12 from Gibberella fujikuroi (strain CBS 195.34 / IMI 58289 / NRRL A-6831) (Bakanae and foot rot disease fungus).